We begin with the raw amino-acid sequence, 356 residues long: Galectin-9C (356 aa).

The Galectin 1 domain occupies 17 to 148; it reads FSGTIQGGLQ…SVQLSYISFQ (132 aa). An a beta-D-galactoside-binding site is contributed by 82 to 88; it reads WGPEERK. Residues 170–190 form a disordered region; the sequence is FPPRPRGRRQKPPSVRPANPA. The 129-residue stretch at 228-356 folds into the Galectin 2 domain; sequence FITTIPGGLY…GDIQLTHVQT (129 aa). An a beta-D-galactoside-binding site is contributed by 288-294; the sequence is WGSEERS.

Its function is as follows. Binds galactosides. The polypeptide is Galectin-9C (LGALS9C) (Homo sapiens (Human)).